Here is a 451-residue protein sequence, read N- to C-terminus: Tubulin alpha-3 chain (451 aa).

Q11 serves as a coordination point for GTP. K40 carries the N6-acetyllysine modification. GTP is bound by residues E71, G144, T145, T179, N206, and N228. Residue E71 coordinates Mg(2+). E254 is an active-site residue.

It belongs to the tubulin family. As to quaternary structure, dimer of alpha and beta chains. A typical microtubule is a hollow water-filled tube with an outer diameter of 25 nm and an inner diameter of 15 nM. Alpha-beta heterodimers associate head-to-tail to form protofilaments running lengthwise along the microtubule wall with the beta-tubulin subunit facing the microtubule plus end conferring a structural polarity. Microtubules usually have 13 protofilaments but different protofilament numbers can be found in some organisms and specialized cells. Requires Mg(2+) as cofactor. Post-translationally, undergoes a tyrosination/detyrosination cycle, the cyclic removal and re-addition of a C-terminal tyrosine residue by the enzymes tubulin tyrosine carboxypeptidase (TTCP) and tubulin tyrosine ligase (TTL), respectively. Acetylation of alpha chains at Lys-40 stabilizes microtubules and affects affinity and processivity of microtubule motors. This modification has a role in multiple cellular functions, ranging from cell motility, cell cycle progression or cell differentiation to intracellular trafficking and signaling.

It localises to the cytoplasm. The protein localises to the cytoskeleton. It catalyses the reaction GTP + H2O = GDP + phosphate + H(+). Functionally, tubulin is the major constituent of microtubules, a cylinder consisting of laterally associated linear protofilaments composed of alpha- and beta-tubulin heterodimers. Microtubules grow by the addition of GTP-tubulin dimers to the microtubule end, where a stabilizing cap forms. Below the cap, tubulin dimers are in GDP-bound state, owing to GTPase activity of alpha-tubulin. The protein is Tubulin alpha-3 chain (TUBA3) of Hordeum vulgare (Barley).